The chain runs to 117 residues: Iron-sulfur cluster insertion protein ErpA (117 aa).

Positions 45, 109, and 111 each coordinate iron-sulfur cluster.

This sequence belongs to the HesB/IscA family. In terms of assembly, homodimer. It depends on iron-sulfur cluster as a cofactor.

Required for insertion of 4Fe-4S clusters for at least IspG. The polypeptide is Iron-sulfur cluster insertion protein ErpA (Blochmanniella pennsylvanica (strain BPEN)).